A 352-amino-acid chain; its full sequence is Eukaryotic translation initiation factor 3 subunit H (352 aa).

The interval 1–34 is disordered; sequence MASRKEGTGSTATSSSSTGGAVGKGKGKGGSGDS. Phosphoserine is present on Ser3. Residues 8-19 show a composition bias toward low complexity; that stretch reads TGSTATSSSSTG. A compositionally biased stretch (gly residues) spans 20-32; the sequence is GAVGKGKGKGGSG. The region spanning 39 to 173 is the MPN domain; the sequence is VQIDGLVVLK…LKAYRLTPKL (135 aa). Ser183 bears the Phosphoserine mark. The disordered stretch occupies residues 265 to 300; it reads RNSSKQQQQKHQYQQRRQQENMQRQSRGEPPLPEED. Residues 270-289 show a composition bias toward low complexity; the sequence is QQQQKHQYQQRRQQENMQRQ. Lys303 is covalently cross-linked (Glycyl lysine isopeptide (Lys-Gly) (interchain with G-Cter in SUMO2)).

It belongs to the eIF-3 subunit H family. As to quaternary structure, component of the eukaryotic translation initiation factor 3 (eIF-3) complex, which is composed of 13 subunits: EIF3A, EIF3B, EIF3C, EIF3D, EIF3E, EIF3F, EIF3G, EIF3H, EIF3I, EIF3J, EIF3K, EIF3L and EIF3M. The eIF-3 complex appears to include 3 stable modules: module A is composed of EIF3A, EIF3B, EIF3G and EIF3I; module B is composed of EIF3F, EIF3H, and EIF3M; and module C is composed of EIF3C, EIF3D, EIF3E, EIF3K and EIF3L. EIF3C of module C binds EIF3B of module A and EIF3H of module B, thereby linking the three modules. EIF3J is a labile subunit that binds to the eIF-3 complex via EIF3B. The eIF-3 complex interacts with RPS6KB1 under conditions of nutrient depletion. Mitogenic stimulation leads to binding and activation of a complex composed of MTOR and RPTOR, leading to phosphorylation and release of RPS6KB1 and binding of EIF4B to eIF-3. Interacts with RNF139; the interaction leads to protein translation inhibitions in a ubiquitination-dependent manner. Interacts with DHX33; the interaction is independent of RNA.

It is found in the cytoplasm. Its function is as follows. Component of the eukaryotic translation initiation factor 3 (eIF-3) complex, which is required for several steps in the initiation of protein synthesis. The eIF-3 complex associates with the 40S ribosome and facilitates the recruitment of eIF-1, eIF-1A, eIF-2:GTP:methionyl-tRNAi and eIF-5 to form the 43S pre-initiation complex (43S PIC). The eIF-3 complex stimulates mRNA recruitment to the 43S PIC and scanning of the mRNA for AUG recognition. The eIF-3 complex is also required for disassembly and recycling of post-termination ribosomal complexes and subsequently prevents premature joining of the 40S and 60S ribosomal subunits prior to initiation. The eIF-3 complex specifically targets and initiates translation of a subset of mRNAs involved in cell proliferation, including cell cycling, differentiation and apoptosis, and uses different modes of RNA stem-loop binding to exert either translational activation or repression. The sequence is that of Eukaryotic translation initiation factor 3 subunit H (Eif3h) from Rattus norvegicus (Rat).